The primary structure comprises 475 residues: Aspartyl/glutamyl-tRNA(Asn/Gln) amidotransferase subunit B (475 aa).

Belongs to the GatB/GatE family. GatB subfamily. Heterotrimer of A, B and C subunits.

The enzyme catalyses L-glutamyl-tRNA(Gln) + L-glutamine + ATP + H2O = L-glutaminyl-tRNA(Gln) + L-glutamate + ADP + phosphate + H(+). It carries out the reaction L-aspartyl-tRNA(Asn) + L-glutamine + ATP + H2O = L-asparaginyl-tRNA(Asn) + L-glutamate + ADP + phosphate + 2 H(+). In terms of biological role, allows the formation of correctly charged Asn-tRNA(Asn) or Gln-tRNA(Gln) through the transamidation of misacylated Asp-tRNA(Asn) or Glu-tRNA(Gln) in organisms which lack either or both of asparaginyl-tRNA or glutaminyl-tRNA synthetases. The reaction takes place in the presence of glutamine and ATP through an activated phospho-Asp-tRNA(Asn) or phospho-Glu-tRNA(Gln). The chain is Aspartyl/glutamyl-tRNA(Asn/Gln) amidotransferase subunit B from Thermoanaerobacter sp. (strain X514).